The sequence spans 143 residues: Large ribosomal subunit protein uL11 (143 aa).

The protein belongs to the universal ribosomal protein uL11 family. In terms of assembly, part of the ribosomal stalk of the 50S ribosomal subunit. Interacts with L10 and the large rRNA to form the base of the stalk. L10 forms an elongated spine to which L12 dimers bind in a sequential fashion forming a multimeric L10(L12)X complex. Post-translationally, one or more lysine residues are methylated.

Its function is as follows. Forms part of the ribosomal stalk which helps the ribosome interact with GTP-bound translation factors. The sequence is that of Large ribosomal subunit protein uL11 from Paraburkholderia xenovorans (strain LB400).